The following is a 553-amino-acid chain: Protein TIC 55, chloroplastic (553 aa).

A chloroplast-targeting transit peptide spans 1–60; it reads MALALASANSFLLPTKTHFALHVSPPPSKKTLLCTNPSSNFSFNKALSSRRRKQAWCVAA. At 61-492 the chain is on the stromal side; sequence AADVKDATLL…GCSSAIKAFQ (432 aa). Residues 103–208 form the Rieske domain; the sequence is WYPLYLTKNV…VRDSQGVLWV (106 aa). 4 residues coordinate [2Fe-2S] cluster: Cys-144, His-146, Cys-163, and His-166. 2 residues coordinate Fe cation: His-257 and His-262. The chain crosses the membrane as a helical span at residues 493–513; it reads IWKNVLSGVVVALAALAILVS. Over 514–518 the chain is Chloroplast intermembrane; it reads GRQWK. The chain crosses the membrane as a helical span at residues 519–539; that stretch reads VLLLASASLCSVGVYACSTAI. Over 540 to 553 the chain is Stromal; the sequence is AMNTTNFIRVHRRL.

As to quaternary structure, part of the Tic complex. Interacts with TIC62 and TIC110. It depends on [2Fe-2S] cluster as a cofactor.

The protein resides in the plastid. It is found in the chloroplast inner membrane. Functionally, involved in protein precursor import into chloroplasts. Part of the redox regulon consisting of TIC32, TIC 55 and TIC62. The chain is Protein TIC 55, chloroplastic (TIC55) from Pisum sativum (Garden pea).